The sequence spans 705 residues: Tryptophan synthase (705 aa).

The tract at residues 1–293 (MEAIKKVFEQ…QLTPNAETAK (293 aa)) is tryptophan synthase alpha chain. Residues E49 and D60 each act as proton acceptor in the active site. Residues 266 to 287 (KGEPSRVRSPGAAQRTPSQLTP) form a disordered region. The interval 294 to 705 (GVENILPARF…HVSSNAIPSK (412 aa)) is tryptophan synthase beta chain. Position 381 is an N6-(pyridoxal phosphate)lysine (K381).

It in the N-terminal section; belongs to the TrpA family. The protein in the C-terminal section; belongs to the TrpB family. Pyridoxal 5'-phosphate is required as a cofactor.

The enzyme catalyses (1S,2R)-1-C-(indol-3-yl)glycerol 3-phosphate + L-serine = D-glyceraldehyde 3-phosphate + L-tryptophan + H2O. It functions in the pathway amino-acid biosynthesis; L-tryptophan biosynthesis; L-tryptophan from chorismate: step 5/5. This is Tryptophan synthase (TRP-1) from Coprinopsis cinerea (Inky cap fungus).